Reading from the N-terminus, the 37-residue chain is Large ribosomal subunit protein bL36 (37 aa).

It belongs to the bacterial ribosomal protein bL36 family.

The protein is Large ribosomal subunit protein bL36 of Marinobacter nauticus (strain ATCC 700491 / DSM 11845 / VT8) (Marinobacter aquaeolei).